The chain runs to 562 residues: 2-hydroxyisobutanoyl-CoA mutase large subunit (562 aa).

(3S)-3-hydroxybutanoyl-CoA-binding positions include 76–79, 86–88, Asp117, 196–198, Arg235, Asn240, His245, and Arg284; these read YPTM, TMR, and TVQ.

Belongs to the acyl-CoA mutase large subunit family. As to quaternary structure, homotetramer composed of two large substrate-binding subunits (HcmA) and two small cobalamin-binding subunits (HcmB).

It catalyses the reaction 2-hydroxyisobutanoyl-CoA = (3S)-3-hydroxybutanoyl-CoA. Together with HcmB, catalyzes the isomerization of 2-hydroxyisobutyryl-CoA and 3-hydroxybutyryl-CoA. Is specific for 2-hydroxyisobutyryl-CoA and (S)-3-hydroxybutyryl-CoA, and shows only very low activity with (R)-3-hydroxybutyryl-CoA, isobutyryl-CoA and butyryl-CoA. In vitro, can isomerize pivalyl-CoA and isovaleryl-CoA, with much lower efficiency. Plays a central role in the degradation of substrates bearing a tert-butyl moiety, such as the fuel oxygenate methyl tert-butyl ether (MTBE) and its metabolites. This is 2-hydroxyisobutanoyl-CoA mutase large subunit from Aquincola tertiaricarbonis.